A 241-amino-acid polypeptide reads, in one-letter code: MKKTKKTPTGGYGGSGSHKLYQRVKKKAGTIKASSRRWLERHLNDPYVHQSKVDGYRSRAAYKLIEMNERYKFLKKGQKIIDLGAAPGGWCQVAQRIVGSSDEKPSVVGIDYLPVVPLPGVIMLEMDFLHTDAPQKLIDALGTKPDVVLSDMAAPTTGHRQTDYLRTTYLCEVAADFALSVLKSGGHFLVKAFQGGAENTLLTTLKQNFKTVHHVKPPASRTESVELYLLALEFKAKTEVK.

Positions 88, 90, 111, 127, and 151 each coordinate S-adenosyl-L-methionine. Lysine 191 serves as the catalytic Proton acceptor.

Belongs to the class I-like SAM-binding methyltransferase superfamily. RNA methyltransferase RlmE family.

It localises to the cytoplasm. The enzyme catalyses uridine(2552) in 23S rRNA + S-adenosyl-L-methionine = 2'-O-methyluridine(2552) in 23S rRNA + S-adenosyl-L-homocysteine + H(+). Functionally, specifically methylates the uridine in position 2552 of 23S rRNA at the 2'-O position of the ribose in the fully assembled 50S ribosomal subunit. The chain is Ribosomal RNA large subunit methyltransferase E from Bartonella quintana (strain Toulouse) (Rochalimaea quintana).